The chain runs to 263 residues: Putative 2-aminoethylphosphonate transport system permease protein PhnV (263 aa).

The next 6 helical transmembrane spans lie at 13–33, 69–89, 104–124, 131–151, 185–205, and 233–253; these read GVVA…VILM, LTIG…AALA, VFYL…LVAF, MNGT…AFTF, LPLL…LSMG, and NIAD…LLMM. The ABC transmembrane type-1 domain maps to 65-253; that stretch reads LLASLTIGFC…LVAITLLLMM (189 aa).

The protein belongs to the binding-protein-dependent transport system permease family.

It is found in the cell inner membrane. In terms of biological role, probably part of the PhnSTUV complex (TC 3.A.1.11.5) involved in 2-aminoethylphosphonate import. Probably responsible for the translocation of the substrate across the membrane. This Salmonella typhi protein is Putative 2-aminoethylphosphonate transport system permease protein PhnV (phnV).